A 588-amino-acid chain; its full sequence is Adenine deaminase (588 aa).

This sequence belongs to the metallo-dependent hydrolases superfamily. Adenine deaminase family. As to quaternary structure, homodimer. Mn(2+) is required as a cofactor.

It catalyses the reaction adenine + H2O + H(+) = hypoxanthine + NH4(+). In Escherichia fergusonii (strain ATCC 35469 / DSM 13698 / CCUG 18766 / IAM 14443 / JCM 21226 / LMG 7866 / NBRC 102419 / NCTC 12128 / CDC 0568-73), this protein is Adenine deaminase.